A 292-amino-acid chain; its full sequence is Malectin (292 aa).

The first 28 residues, 1 to 28 (MLGAWAVEGTAVALLRLLLLLLPPAIRG), serve as a signal peptide directing secretion. Topologically, residues 29-269 (PGLGVAGVAG…TPNPYASDNS (241 aa)) are lumenal. 5 residues coordinate a carbohydrate: Y82, Y104, Y131, F132, and D201. The disordered stretch occupies residues 221–265 (LQPHPGLEKKEEEEEEEEYDEGSNLKKQTNKNRVQSGPRTPNPYA). The span at 231 to 241 (EEEEEEEEYDE) shows a compositional bias: acidic residues. Polar residues predominate over residues 245–265 (LKKQTNKNRVQSGPRTPNPYA). N-linked (GlcNAc...) asparagine glycosylation occurs at N268. Residues 270–290 (SLMFPILVAFGVFIPTLFCLC) form a helical membrane-spanning segment. Over 291-292 (RL) the chain is Cytoplasmic.

The protein belongs to the malectin family. In terms of assembly, interacts with the oligosaccharyltransferase (OST) complex.

It localises to the endoplasmic reticulum membrane. Carbohydrate-binding protein with a strong ligand preference for Glc2-N-glycan. May play a role in the early steps of protein N-glycosylation. In Homo sapiens (Human), this protein is Malectin.